The following is a 150-amino-acid chain: Ankyrin repeat protein C18/B24 (150 aa).

The stretch at 41-73 (ENKTLLYYAVDVNNIQFAKRLLEYGASVTTSRS) is one ANK repeat.

This Vaccinia virus (strain Copenhagen) (VACV) protein is Ankyrin repeat protein C18/B24.